The chain runs to 301 residues: Mas-related G-protein coupled receptor member A6 (301 aa).

The Extracellular segment spans residues 1 to 15 (MHRSISIRILITNLM). A helical transmembrane segment spans residues 16–36 (IVILGLVGLTGNAIVFWLLLF). The Cytoplasmic portion of the chain corresponds to 37–42 (RLRRNA). The chain crosses the membrane as a helical span at residues 43–63 (FSIYILNLALADFLFLLCHII). Residues 64–77 (ASTEHILTFSSPNS) are Extracellular-facing. The helical transmembrane segment at 78–98 (IFINCLYTFRVLLYIAGLNML) threads the bilayer. The Cytoplasmic segment spans residues 99–128 (SAISIERCLSVMCPIWYRCHRPEHTSTVMC). The helical transmembrane segment at 129 to 149 (AMIWVLSLLLCILYRYFCGFL) threads the bilayer. Residues 150–163 (DTKYEDDYGCLAMN) lie on the Extracellular side of the membrane. The helical transmembrane segment at 164-184 (FLTTAYLMFLFVVLCVSSLAL) threads the bilayer. Over 185–203 (LARLFCGAGRMKLTRLYVT) the chain is Cytoplasmic. Residues 204–224 (ITLTLLVFLLCGLPCGFYWFL) traverse the membrane as a helical segment. Residues 225-240 (LSKIKNVFSVFEFSLY) lie on the Extracellular side of the membrane. The chain crosses the membrane as a helical span at residues 241 to 261 (LTSVVLTAINSCANPIIYFFV). The Cytoplasmic segment spans residues 262–301 (GSFRHRLKHQTLKMVLQSALQDTPETPENMVEMSRNKAEL).

Belongs to the G-protein coupled receptor 1 family. Mas subfamily. In terms of tissue distribution, expressed in a subset of sensory neurons that includes nociceptors. Expressed in the subclass of non-peptidergic sensory neurons that are IB4(+) and VR1(-).

It localises to the cell membrane. Orphan receptor. May be a receptor for RFamide-family neuropeptides such as NPFF and NPAF, which are analgesic in vivo. May regulate nociceptor function and/or development, including the sensation or modulation of pain. This chain is Mas-related G-protein coupled receptor member A6 (Mrgpra6), found in Mus musculus (Mouse).